Consider the following 444-residue polypeptide: Homocysteine/cysteine synthase (444 aa).

The residue at position 44 (serine 44) is a Phosphoserine. Residue lysine 160 forms a Glycyl lysine isopeptide (Lys-Gly) (interchain with G-Cter in ubiquitin) linkage. Lysine 209 bears the N6-(pyridoxal phosphate)lysine mark.

This sequence belongs to the trans-sulfuration enzymes family. In terms of assembly, homotetramer. The cofactor is pyridoxal 5'-phosphate.

Its subcellular location is the cytoplasm. The catalysed reaction is O-acetyl-L-homoserine + methanethiol = L-methionine + acetate + H(+). The enzyme catalyses O-acetyl-L-homoserine + hydrogen sulfide = L-homocysteine + acetate. It carries out the reaction O-acetyl-L-serine + hydrogen sulfide = L-cysteine + acetate. Its pathway is amino-acid biosynthesis; L-methionine biosynthesis via de novo pathway; L-homocysteine from O-acetyl-L-homoserine. Catalyzes the conversion of O-acetyl-L-homoserine (OAH) into homocysteine in the methionine biosynthesis pathway. Required to efficiently reduce toxic levels of hydrogen sulfide generated when the sulfate assimilation pathway (SAP) is active. Also catalyzes the conversion of O-acetylserine (OAS) into cysteine, the last step in the cysteine biosynthesis pathway. However, it seems that in S.cerevisiae cysteine biosynthesis occurs exclusively through the cystathionine pathway and not via direct incorporation of sulfur into OAS. It therefore has no metabolic role in cysteine biosynthesis and may only have a regulatory role controlling OAS levels. The sequence is that of Homocysteine/cysteine synthase from Saccharomyces cerevisiae (strain ATCC 204508 / S288c) (Baker's yeast).